The sequence spans 320 residues: Epoxidase atD (320 aa).

2 N-linked (GlcNAc...) asparagine glycosylation sites follow: N245 and N299.

Its pathway is secondary metabolite biosynthesis. Functionally, epoxidase; part of the gene cluster that mediates the biosynthesis of terreic acid, a quinone epoxide inhibitor of Bruton's tyrosine kinase. The first step of the pathway is the synthesis of 6-methylsalicylic acid (6-MSA) by the 6-methylsalicylic acid synthase atX. In the biosynthesis of 6-MSA, atX utilizes one acetyl-CoA and three malonyl-CoAs as its substrates and catalyzes a series of programmed reactions including Claisen condensation, reduction, aldol cyclization, and the hydrolytic cleavage that yields 6-MSA. The 6-methylsalicylate 1-monooxygenase atA then catalyzes the decarboxylative hydroxylation of 6-MSA to 3-methylcatechol. The next step is the conversion of 3-methylcatechol to 3-methyl-1,2,4-benzenetriol by cytochrome P450 monooxygenase atE, which is enhanced by cytochrome P450 monooxygenase atG. Then, the epoxidase atD catalyzes the epoxidation and hydroxyl oxidation of 3-methyl-1,2,4-benzenetriol to terremutin. Lastly, GMC oxidoreductase atC oxidizes terremutin to terreic acid. This is Epoxidase atD from Aspergillus terreus (strain NIH 2624 / FGSC A1156).